A 111-amino-acid polypeptide reads, in one-letter code: Urease subunit beta (111 aa).

The protein belongs to the urease beta subunit family. As to quaternary structure, heterotrimer of UreA (gamma), UreB (beta) and UreC (alpha) subunits. Three heterotrimers associate to form the active enzyme.

It localises to the cytoplasm. The enzyme catalyses urea + 2 H2O + H(+) = hydrogencarbonate + 2 NH4(+). It functions in the pathway nitrogen metabolism; urea degradation; CO(2) and NH(3) from urea (urease route): step 1/1. The chain is Urease subunit beta from Geobacillus kaustophilus (strain HTA426).